A 123-amino-acid polypeptide reads, in one-letter code: Steroid Delta-isomerase (123 aa).

Y12 (proton donor) is an active-site residue. D36 serves as the catalytic Proton acceptor. D96 provides a ligand contact to substrate.

In terms of assembly, homodimer.

It catalyses the reaction a 3-oxo-Delta(5)-steroid = a 3-oxo-Delta(4)-steroid. The protein is Steroid Delta-isomerase (ksdI) of Nocardioides simplex (Arthrobacter simplex).